A 620-amino-acid polypeptide reads, in one-letter code: Chaperone protein HscA homolog (620 aa).

The protein belongs to the heat shock protein 70 family.

Chaperone involved in the maturation of iron-sulfur cluster-containing proteins. Has a low intrinsic ATPase activity which is markedly stimulated by HscB. The protein is Chaperone protein HscA homolog of Shewanella baltica (strain OS155 / ATCC BAA-1091).